Reading from the N-terminus, the 285-residue chain is Cytochrome P450 monooxygenase eupD (285 aa).

Residues 1–19 form the signal peptide; the sequence is MSIAGLVTTLPWLMNMLRA. C229 is a heme binding site.

Belongs to the cytochrome P450 family. It depends on heme as a cofactor.

The protein operates within secondary metabolite biosynthesis; terpenoid biosynthesis. Functionally, cytochrome P450 monooxygenase; part of the gene cluster that mediates the biosynthesis of eupenifeldin, a bistropolone meroterpenoid that acts as an antitumor agent. The first step of eupenifeldin biosynthesis is the biosynthesis of 3-methylorcinaldehyde performed by the non-reducing polyketide synthase eupA. Oxidative dearomatization of 3-methylorcinaldehyde likely catalyzed by the FAD-dependent monooxygenase eupB is followed by oxidative ring expansion by the 2-oxoglutarate-dependent dioxygenase eupC to provide the first tropolone metabolite, tropolone stipitaldehyde. In parallel, generation of sesquiterpene alpha-humulene from farnesylpyrophosphate (FPP) is catalyzed by the terpene cyclase eupE. The cytochrome P450 monooxygenase eupD then hydroxylates humulene to humulenol. The putative Diels-Alderase eupF probably catalyzes the formation of the tropolone-humulene skeleton by linking humulenol and the polyketide moiety. The short-chain dehydrogenase/reductase eupG and the flavin-dependent monooxygenase eupH are also essential for eupenifeldin biosynthesis and are likely the additional decorating enzymes of the tropolone-humulene skeleton to produce final eupenifeldin or derivatives. This Phoma sp protein is Cytochrome P450 monooxygenase eupD.